Reading from the N-terminus, the 500-residue chain is Aspartyl/glutamyl-tRNA(Asn/Gln) amidotransferase subunit B (500 aa).

This sequence belongs to the GatB/GatE family. GatB subfamily. As to quaternary structure, heterotrimer of A, B and C subunits.

It carries out the reaction L-glutamyl-tRNA(Gln) + L-glutamine + ATP + H2O = L-glutaminyl-tRNA(Gln) + L-glutamate + ADP + phosphate + H(+). The enzyme catalyses L-aspartyl-tRNA(Asn) + L-glutamine + ATP + H2O = L-asparaginyl-tRNA(Asn) + L-glutamate + ADP + phosphate + 2 H(+). Its function is as follows. Allows the formation of correctly charged Asn-tRNA(Asn) or Gln-tRNA(Gln) through the transamidation of misacylated Asp-tRNA(Asn) or Glu-tRNA(Gln) in organisms which lack either or both of asparaginyl-tRNA or glutaminyl-tRNA synthetases. The reaction takes place in the presence of glutamine and ATP through an activated phospho-Asp-tRNA(Asn) or phospho-Glu-tRNA(Gln). This Sinorhizobium fredii (strain NBRC 101917 / NGR234) protein is Aspartyl/glutamyl-tRNA(Asn/Gln) amidotransferase subunit B.